A 399-amino-acid polypeptide reads, in one-letter code: Serine palmitoyltransferase (399 aa).

Pyridoxal 5'-phosphate contacts are provided by residues 113–114 (GF), histidine 213, threonine 241, and serine 243. Lysine 244 is modified (N6-(pyridoxal phosphate)lysine).

This sequence belongs to the class-II pyridoxal-phosphate-dependent aminotransferase family. As to quaternary structure, homodimer. It depends on pyridoxal 5'-phosphate as a cofactor.

The protein localises to the cytoplasm. It is found in the cell inner membrane. The enzyme catalyses L-serine + hexadecanoyl-CoA + H(+) = 3-oxosphinganine + CO2 + CoA. The protein operates within lipid metabolism; sphingolipid metabolism. Catalyzes the condensation of L-serine with palmitoyl-CoA (hexadecanoyl-CoA) to produce 3-oxosphinganine. Exhibits a broad substrate specificity concerning the chain length and the degree of unsaturation of acyl-CoA. The protein is Serine palmitoyltransferase of Sphingobacterium multivorum.